The sequence spans 43 residues: Protein PsbN (43 aa).

Residues 5–27 form a helical membrane-spanning segment; sequence NLVAIFVSCLLVSLTGYALYTSF.

The protein belongs to the PsbN family.

It localises to the plastid. Its subcellular location is the chloroplast thylakoid membrane. Its function is as follows. May play a role in photosystem I and II biogenesis. The protein is Protein PsbN of Ephedra sinica (Chinese ephedra).